Consider the following 283-residue polypeptide: Bifunctional protein FolD (283 aa).

NADP(+) is bound by residues 165 to 167 and Ser190; that span reads GRS.

This sequence belongs to the tetrahydrofolate dehydrogenase/cyclohydrolase family. As to quaternary structure, homodimer.

It catalyses the reaction (6R)-5,10-methylene-5,6,7,8-tetrahydrofolate + NADP(+) = (6R)-5,10-methenyltetrahydrofolate + NADPH. The catalysed reaction is (6R)-5,10-methenyltetrahydrofolate + H2O = (6R)-10-formyltetrahydrofolate + H(+). It functions in the pathway one-carbon metabolism; tetrahydrofolate interconversion. In terms of biological role, catalyzes the oxidation of 5,10-methylenetetrahydrofolate to 5,10-methenyltetrahydrofolate and then the hydrolysis of 5,10-methenyltetrahydrofolate to 10-formyltetrahydrofolate. In Variovorax paradoxus (strain S110), this protein is Bifunctional protein FolD.